The following is an 836-amino-acid chain: Probable ribonuclease ZC3H12B (836 aa).

The tract at residues 1–92 is disordered; the sequence is MTATAEVETP…SPCLDRPSFS (92 aa). Positions 8–28 are enriched in basic and acidic residues; that stretch reads ETPKMEKSASKEEKQQPKQDS. Residues 35–46 are compositionally biased toward acidic residues; sequence DSEEWMSSESDP. Over residues 50-60 the composition is skewed to polar residues; that stretch reads SLKSSDNSKSC. Over residues 70-80 the composition is skewed to basic residues; sequence KEMHSKPHRQL. The RNase NYN domain maps to 190-345; it reads LRPVVIDGSN…LGRHGPSLEN (156 aa). The C3H1-type zinc finger occupies 355-380; the sequence is EHKKQPCPYGKKCTYGHKCKYYHPER.

Belongs to the ZC3H12 family. Requires Mg(2+) as cofactor.

Functionally, may function as RNase and regulate the levels of target RNA species. The protein is Probable ribonuclease ZC3H12B (ZC3H12B) of Homo sapiens (Human).